Reading from the N-terminus, the 590-residue chain is Pescadillo homolog (590 aa).

Residues 297–318 (AKADAGEEEEVEEEEEVEDDGL) are disordered. Positions 302-318 (GEEEEVEEEEEVEDDGL) are enriched in acidic residues. The BRCT domain occupies 337–446 (TAGQLFSNFT…KLLPVSEYAP (110 aa)). The segment at 452 to 590 (AHLSPWGDAG…RKLNEKKEKR (139 aa)) is disordered. Residues 471–499 (DASDDDEDDEDIEVAPEDYDKDDEEEEAE) show a composition bias toward acidic residues. The stretch at 489 to 589 (YDKDDEEEEA…RRKLNEKKEK (101 aa)) forms a coiled coil. 3 stretches are compositionally biased toward basic and acidic residues: residues 500 to 517 (AEAKQHQRELEAEAKGTK), 532 to 547 (DKMTKAEKQEEEDKKL), and 567 to 577 (NDKKSDREAEL).

It belongs to the pescadillo family. Component of the NOP7 complex, composed of ERB1, NOP7 and YTM1. The complex is held together by ERB1, which interacts with NOP7 via its N-terminal domain and with YTM1 via a high-affinity interaction between the seven-bladed beta-propeller domains of the 2 proteins. The NOP7 complex associates with the 66S pre-ribosome.

It is found in the nucleus. The protein resides in the nucleolus. It localises to the nucleoplasm. Its function is as follows. Component of the NOP7 complex, which is required for maturation of the 25S and 5.8S ribosomal RNAs and formation of the 60S ribosome. The chain is Pescadillo homolog from Yarrowia lipolytica (strain CLIB 122 / E 150) (Yeast).